Reading from the N-terminus, the 72-residue chain is Translation initiation factor IF-1 (72 aa).

In terms of domain architecture, S1-like spans 1 to 72 (MSKDDVIQMQ…SRARIVFRAK (72 aa)).

This sequence belongs to the IF-1 family. As to quaternary structure, component of the 30S ribosomal translation pre-initiation complex which assembles on the 30S ribosome in the order IF-2 and IF-3, IF-1 and N-formylmethionyl-tRNA(fMet); mRNA recruitment can occur at any time during PIC assembly.

It is found in the cytoplasm. In terms of biological role, one of the essential components for the initiation of protein synthesis. Stabilizes the binding of IF-2 and IF-3 on the 30S subunit to which N-formylmethionyl-tRNA(fMet) subsequently binds. Helps modulate mRNA selection, yielding the 30S pre-initiation complex (PIC). Upon addition of the 50S ribosomal subunit IF-1, IF-2 and IF-3 are released leaving the mature 70S translation initiation complex. The sequence is that of Translation initiation factor IF-1 from Methylibium petroleiphilum (strain ATCC BAA-1232 / LMG 22953 / PM1).